The chain runs to 100 residues: Co-chaperonin GroES (100 aa).

This sequence belongs to the GroES chaperonin family. Heptamer of 7 subunits arranged in a ring. Interacts with the chaperonin GroEL.

The protein resides in the cytoplasm. Functionally, together with the chaperonin GroEL, plays an essential role in assisting protein folding. The GroEL-GroES system forms a nano-cage that allows encapsulation of the non-native substrate proteins and provides a physical environment optimized to promote and accelerate protein folding. GroES binds to the apical surface of the GroEL ring, thereby capping the opening of the GroEL channel. This is Co-chaperonin GroES from Nocardia farcinica (strain IFM 10152).